The primary structure comprises 397 residues: Elongation factor Tu (397 aa).

The tr-type G domain occupies 10–207 (KPHCNIGTIG…AVDEWIPQPE (198 aa)). Residues 19 to 26 (GHVDHGKT) are G1. 19–26 (GHVDHGKT) is a binding site for GTP. Thr26 serves as a coordination point for Mg(2+). The tract at residues 61–65 (GITIS) is G2. Residues 82-85 (DCPG) form a G3 region. GTP contacts are provided by residues 82–86 (DCPGH) and 137–140 (NKVD). Residues 137-140 (NKVD) form a G4 region. Residues 175–177 (SAL) form a G5 region.

It belongs to the TRAFAC class translation factor GTPase superfamily. Classic translation factor GTPase family. EF-Tu/EF-1A subfamily. As to quaternary structure, monomer.

It localises to the cytoplasm. The enzyme catalyses GTP + H2O = GDP + phosphate + H(+). In terms of biological role, GTP hydrolase that promotes the GTP-dependent binding of aminoacyl-tRNA to the A-site of ribosomes during protein biosynthesis. In Sphingopyxis alaskensis (strain DSM 13593 / LMG 18877 / RB2256) (Sphingomonas alaskensis), this protein is Elongation factor Tu.